Reading from the N-terminus, the 175-residue chain is S-fimbrial protein subunit SfaG (175 aa).

The signal sequence occupies residues methionine 1–alanine 27. Cysteine 43 and cysteine 83 are joined by a disulfide.

It belongs to the fimbrial protein family.

The protein localises to the fimbrium. Functionally, fimbriae (also called pili), polar filaments radiating from the surface of the bacterium to a length of 0.5-1.5 micrometers and numbering 100-300 per cell, enable bacteria to colonize the epithelium of specific host organs. A minor fimbrial subunit. This protein is necessary for full expression of S-specific binding. S-fimbrial adhesins enable pathogenic E.coli causing urinary-tract infections or newborn meningitis to attach to glycoproteins terminating with alpha-sialic acid-(2-3)-beta-Gal. This is S-fimbrial protein subunit SfaG (sfaG) from Escherichia coli O6:K15:H31 (strain 536 / UPEC).